We begin with the raw amino-acid sequence, 155 residues long: Large ribosomal subunit protein uL22c (155 aa).

The protein belongs to the universal ribosomal protein uL22 family. As to quaternary structure, part of the 50S ribosomal subunit.

It localises to the plastid. The protein localises to the chloroplast. In terms of biological role, this protein binds specifically to 23S rRNA. Functionally, the globular domain of the protein is located near the polypeptide exit tunnel on the outside of the subunit, while an extended beta-hairpin is found that lines the wall of the exit tunnel in the center of the 70S ribosome. The polypeptide is Large ribosomal subunit protein uL22c (rpl22) (Atropa belladonna (Belladonna)).